Consider the following 741-residue polypeptide: Protein O-mannosyl-transferase TMTC4 (741 aa).

Over 1–14 (MAVLDTDLDHILPS) the chain is Cytoplasmic. A helical transmembrane segment spans residues 15–35 (SVLPPFWAKLVVGSVAIVCFA). The Extracellular segment spans residues 36-111 (RSYDGDFVFD…FHPVGFHVVN (76 aa)). A glycan (N-linked (GlcNAc...) asparagine) is linked at N78. A helical membrane pass occupies residues 112-132 (ILLHSGISVLMVDVFSVLFGG). The Cytoplasmic portion of the chain corresponds to 133–141 (LQYTSKGRR). The chain crosses the membrane as a helical span at residues 142-162 (LHLAPRASLLAALLFAVHPVH). The Extracellular segment spans residues 163–165 (TEC). A helical transmembrane segment spans residues 166–186 (VAGVVGRADLLCALFFLLSFL). At 187–198 (GYCKAFRESNKE) the chain is on the cytoplasmic side. The chain crosses the membrane as a helical span at residues 199 to 219 (GAHSSTFWVLLSIFLGAVAML). The Extracellular portion of the chain corresponds to 220–224 (CKEQG). Residues 225 to 245 (ITVLGLNAVFDILVIGKFNVL) form a helical membrane-spanning segment. The Cytoplasmic segment spans residues 246–268 (EIVQKVLHKDKSLENLGMLRNGG). The helical transmembrane segment at 269-288 (LLFRMTLLTSGGAGMLYVRW) threads the bilayer. Over 289–354 (RIMGTGPPAF…PLIKSISDWR (66 aa)) the chain is Extracellular. Residues 355 to 375 (VIALAALWFCLIGLICQALCS) form a helical membrane-spanning segment. The Cytoplasmic portion of the chain corresponds to 376–382 (EDGHKRR). Residues 383-403 (ILTLGLGFLVIPFLPASNLFF) form a helical membrane-spanning segment. The Extracellular segment spans residues 404-412 (RVGFVVAER). The helical transmembrane segment at 413–433 (VLYLPSVGYCVLLTFGFGALS) threads the bilayer. At 434 to 440 (KHTKKKK) the chain is on the cytoplasmic side. Residues 441–461 (LIAAVVLGILFINTLRCVLRS) form a helical membrane-spanning segment. Topologically, residues 462–741 (GEWRSEEQLF…KLELMQKKAV (280 aa)) are extracellular. TPR repeat units follow at residues 482 to 515 (AKVH…NPKY), 516 to 549 (VHAM…QPDF), 550 to 583 (AAAW…RRKY), 584 to 617 (PDCY…KPEH), 618 to 651 (SLAW…IPND), 652 to 685 (HSLM…NPNA), and 686 to 719 (ASYH…DPTA). The N-linked (GlcNAc...) asparagine glycan is linked to N497. N-linked (GlcNAc...) asparagine glycosylation is present at N609.

This sequence belongs to the TMTC family.

The protein localises to the membrane. It is found in the endoplasmic reticulum. The catalysed reaction is a di-trans,poly-cis-dolichyl beta-D-mannosyl phosphate + L-seryl-[protein] = 3-O-(alpha-D-mannosyl)-L-seryl-[protein] + a di-trans,poly-cis-dolichyl phosphate + H(+). It catalyses the reaction a di-trans,poly-cis-dolichyl beta-D-mannosyl phosphate + L-threonyl-[protein] = 3-O-(alpha-D-mannosyl)-L-threonyl-[protein] + a di-trans,poly-cis-dolichyl phosphate + H(+). It participates in protein modification; protein glycosylation. Transfers mannosyl residues to the hydroxyl group of serine or threonine residues. The 4 members of the TMTC family are O-mannosyl-transferases dedicated primarily to the cadherin superfamily, each member seems to have a distinct role in decorating the cadherin domains with O-linked mannose glycans at specific regions. Also acts as O-mannosyl-transferase on other proteins such as PDIA3. This Homo sapiens (Human) protein is Protein O-mannosyl-transferase TMTC4.